The chain runs to 424 residues: UPF0761 membrane protein Smal_0716 (424 aa).

The next 6 membrane-spanning stretches (helical) occupy residues 48–68 (VFAL…FPVF), 101–121 (SAGQ…LITL), 144–164 (FLVY…SLAV), 181–201 (WLAD…CITL), 216–236 (AVPG…GIGA), and 251–271 (VAFV…VLLG).

It belongs to the UPF0761 family.

It is found in the cell inner membrane. The protein is UPF0761 membrane protein Smal_0716 of Stenotrophomonas maltophilia (strain R551-3).